The sequence spans 305 residues: Beta-lactamase ROB-1 (305 aa).

The signal sequence occupies residues 1–33; that stretch reads MLNKLKIGTLLLLTLTACSPNSVHSVTSNPQPA. Catalysis depends on S86, which acts as the Acyl-ester intermediate. Residue 248–250 coordinates substrate; the sequence is KSG.

Belongs to the class-A beta-lactamase family.

It carries out the reaction a beta-lactam + H2O = a substituted beta-amino acid. The sequence is that of Beta-lactamase ROB-1 (rob1) from Actinobacillus pleuropneumoniae (Haemophilus pleuropneumoniae).